Here is a 303-residue protein sequence, read N- to C-terminus: Sporulation regulatory protein (303 aa).

The region spanning 26–213 (TGRLRAGLRK…HRVNDKQTAE (188 aa)) is the FtsK domain. 43–50 (GANHSGKS) contributes to the ATP binding site.

Its function is as follows. Involved in sporulation inhibition and pock formation. This chain is Sporulation regulatory protein (spi), found in Streptomyces azureus.